The sequence spans 31 residues: Cytochrome b6-f complex subunit 6 (31 aa).

Residues 3–23 (TLTSYFGFLLVALTITLVLFI) form a helical membrane-spanning segment.

Belongs to the PetL family. The 4 large subunits of the cytochrome b6-f complex are cytochrome b6, subunit IV (17 kDa polypeptide, PetD), cytochrome f and the Rieske protein, while the 4 small subunits are PetG, PetL, PetM and PetN. The complex functions as a dimer.

The protein localises to the plastid. It localises to the chloroplast thylakoid membrane. Component of the cytochrome b6-f complex, which mediates electron transfer between photosystem II (PSII) and photosystem I (PSI), cyclic electron flow around PSI, and state transitions. PetL is important for photoautotrophic growth as well as for electron transfer efficiency and stability of the cytochrome b6-f complex. The sequence is that of Cytochrome b6-f complex subunit 6 from Populus alba (White poplar).